Here is a 109-residue protein sequence, read N- to C-terminus: uncharacterized protein (109 aa).

To A.calcoaceticus putative ferredoxin.

This is an uncharacterized protein from Escherichia coli O157:H7.